A 299-amino-acid chain; its full sequence is Protoheme IX farnesyltransferase (299 aa).

The next 9 helical transmembrane spans lie at 27–47 (VVAL…HEHF), 53–73 (LIAL…NHLI), 97–117 (FNVL…LMLW), 121–141 (LTAY…TLYL), 149–169 (IVIA…SITG), 175–195 (AWVL…ALAI), 222–242 (ILLY…VGMA), 244–264 (YLYL…AIKL), and 273–293 (AIEM…ALLL).

It belongs to the UbiA prenyltransferase family. Protoheme IX farnesyltransferase subfamily.

The protein resides in the cell inner membrane. The enzyme catalyses heme b + (2E,6E)-farnesyl diphosphate + H2O = Fe(II)-heme o + diphosphate. The protein operates within porphyrin-containing compound metabolism; heme O biosynthesis; heme O from protoheme: step 1/1. Its function is as follows. Converts heme B (protoheme IX) to heme O by substitution of the vinyl group on carbon 2 of heme B porphyrin ring with a hydroxyethyl farnesyl side group. The sequence is that of Protoheme IX farnesyltransferase from Vibrio vulnificus (strain CMCP6).